The sequence spans 247 residues: ATP synthase subunit a, chloroplastic (247 aa).

The next 5 helical transmembrane spans lie at 38 to 58 (QVLI…ILII), 95 to 115 (VPFI…GALL), 134 to 154 (INTT…AGLS), 199 to 219 (LVVV…VMFL), and 220 to 240 (GLFT…AYIG).

This sequence belongs to the ATPase A chain family. In terms of assembly, F-type ATPases have 2 components, CF(1) - the catalytic core - and CF(0) - the membrane proton channel. CF(1) has five subunits: alpha(3), beta(3), gamma(1), delta(1), epsilon(1). CF(0) has four main subunits: a, b, b' and c.

It localises to the plastid. The protein resides in the chloroplast thylakoid membrane. Its function is as follows. Key component of the proton channel; it plays a direct role in the translocation of protons across the membrane. This Glycine max (Soybean) protein is ATP synthase subunit a, chloroplastic.